The following is a 105-amino-acid chain: Nitrogenase-stabilizing/protective protein NifW (105 aa).

This sequence belongs to the NifW family. In terms of assembly, homotrimer; associates with NifD.

Functionally, may protect the nitrogenase Fe-Mo protein from oxidative damage. The polypeptide is Nitrogenase-stabilizing/protective protein NifW (Nostoc punctiforme (strain ATCC 29133 / PCC 73102)).